A 312-amino-acid polypeptide reads, in one-letter code: Olfactory receptor 1D2 (312 aa).

Residues 1–25 (MDGGNQSEGSEFLLLGMSESPEQQR) lie on the Extracellular side of the membrane. The N-linked (GlcNAc...) asparagine glycan is linked to Asn5. A helical membrane pass occupies residues 26 to 49 (ILFWMFLSMYLVTVVGNVLIILAI). Over 50-57 (SSDSCLHT) the chain is Cytoplasmic. Residues 58-79 (PMYFFLANLSFTDLFFVTNTIP) form a helical membrane-spanning segment. Over 80-100 (KMLVNLQSQNKAISYAGCLTQ) the chain is Extracellular. Cys97 and Cys189 form a disulfide bridge. A helical membrane pass occupies residues 101 to 120 (LYFLVSLVALDNLILAVMAY). Residues 121–139 (DRYVAICCPLHYTTAMSPK) lie on the Cytoplasmic side of the membrane. Residues 140–158 (LCILLLSLCWVLSVLYGLI) traverse the membrane as a helical segment. Residues 159–196 (HTLLMTRVTFCGSRKIHYIFCEMYVLLRMACSNIQTNH) are Extracellular-facing. Asn195 carries N-linked (GlcNAc...) asparagine glycosylation. A helical membrane pass occupies residues 197–219 (TVLIATGCFIFLIPFGFVIISYV). At 220–236 (LIIRAILRIPSLSKKYK) the chain is on the cytoplasmic side. A helical membrane pass occupies residues 237 to 259 (AFSTCASHLGAVSLFYGTLCMVY). Residues 260–271 (LKPLHTYSVKDS) lie on the Extracellular side of the membrane. A helical transmembrane segment spans residues 272–291 (VATVMYAVVTPMMNPFIYSL). At 292–312 (RNKDMHGALGRLLDKHFKRLT) the chain is on the cytoplasmic side.

This sequence belongs to the G-protein coupled receptor 1 family.

Its subcellular location is the cell membrane. In terms of biological role, odorant receptor. The protein is Olfactory receptor 1D2 (OR1D2) of Pan troglodytes (Chimpanzee).